Reading from the N-terminus, the 640-residue chain is Glutamyl-tRNA(Gln) amidotransferase subunit E (640 aa).

This sequence belongs to the GatB/GatE family. GatE subfamily. As to quaternary structure, heterodimer of GatD and GatE.

The catalysed reaction is L-glutamyl-tRNA(Gln) + L-glutamine + ATP + H2O = L-glutaminyl-tRNA(Gln) + L-glutamate + ADP + phosphate + H(+). Allows the formation of correctly charged Gln-tRNA(Gln) through the transamidation of misacylated Glu-tRNA(Gln) in organisms which lack glutaminyl-tRNA synthetase. The reaction takes place in the presence of glutamine and ATP through an activated gamma-phospho-Glu-tRNA(Gln). The GatDE system is specific for glutamate and does not act on aspartate. The polypeptide is Glutamyl-tRNA(Gln) amidotransferase subunit E (Methanopyrus kandleri (strain AV19 / DSM 6324 / JCM 9639 / NBRC 100938)).